The sequence spans 152 residues: S-ribosylhomocysteine lyase (152 aa).

3 residues coordinate Fe cation: H53, H57, and C120.

The protein belongs to the LuxS family. As to quaternary structure, homodimer. Requires Fe cation as cofactor.

It carries out the reaction S-(5-deoxy-D-ribos-5-yl)-L-homocysteine = (S)-4,5-dihydroxypentane-2,3-dione + L-homocysteine. Functionally, involved in the synthesis of autoinducer 2 (AI-2) which is secreted by bacteria and is used to communicate both the cell density and the metabolic potential of the environment. The regulation of gene expression in response to changes in cell density is called quorum sensing. Catalyzes the transformation of S-ribosylhomocysteine (RHC) to homocysteine (HC) and 4,5-dihydroxy-2,3-pentadione (DPD). This chain is S-ribosylhomocysteine lyase, found in Enterococcus faecalis (strain ATCC 700802 / V583).